Reading from the N-terminus, the 77-residue chain is Putative defensin-like protein 185 (77 aa).

A signal peptide spans 1 to 22 (MKNSSILLLLVVFFVISSSGEA). 4 disulfide bridges follow: Cys-25–Cys-77, Cys-31–Cys-54, Cys-40–Cys-71, and Cys-44–Cys-73.

It belongs to the DEFL family.

The protein resides in the secreted. In Arabidopsis thaliana (Mouse-ear cress), this protein is Putative defensin-like protein 185 (LCR39).